Reading from the N-terminus, the 96-residue chain is Glutamyl-tRNA(Gln) amidotransferase subunit C (96 aa).

It belongs to the GatC family. As to quaternary structure, heterotrimer of A, B and C subunits.

It carries out the reaction L-glutamyl-tRNA(Gln) + L-glutamine + ATP + H2O = L-glutaminyl-tRNA(Gln) + L-glutamate + ADP + phosphate + H(+). The enzyme catalyses L-aspartyl-tRNA(Asn) + L-glutamine + ATP + H2O = L-asparaginyl-tRNA(Asn) + L-glutamate + ADP + phosphate + 2 H(+). Functionally, allows the formation of correctly charged Asn-tRNA(Asn) or Gln-tRNA(Gln) through the transamidation of misacylated Asp-tRNA(Asn) or Glu-tRNA(Gln) in organisms which lack either or both of asparaginyl-tRNA or glutaminyl-tRNA synthetases. The reaction takes place in the presence of glutamine and ATP through an activated phospho-Asp-tRNA(Asn) or phospho-Glu-tRNA(Gln). This chain is Glutamyl-tRNA(Gln) amidotransferase subunit C, found in Halalkalibacterium halodurans (strain ATCC BAA-125 / DSM 18197 / FERM 7344 / JCM 9153 / C-125) (Bacillus halodurans).